The chain runs to 447 residues: Serine/threonine-protein phosphatase 2A 55 kDa regulatory subunit B gamma isoform (447 aa).

WD repeat units follow at residues 22 to 61, 87 to 128, 171 to 209, 220 to 260, 279 to 317, 334 to 375, and 410 to 446; these read TEAD…KNAP, EIEE…KRPE, GHTY…RSFN, DLTE…LCDK, EIIS…RPIE, ENDC…DVTL, and DFTK…NSDV.

The protein belongs to the phosphatase 2A regulatory subunit B family. In terms of assembly, PP2A consists of a common heterodimeric core enzyme, composed of a 36 kDa catalytic subunit (subunit C) and a 65 kDa constant regulatory subunit (PR65 or subunit A), that associates with a variety of regulatory subunits. Proteins that associate with the core dimer include three families of regulatory subunits B (the R2/B/PR55/B55, R3/B''/PR72/PR130/PR59 and R5/B'/B56 families), the 48 kDa variable regulatory subunit, viral proteins, and cell signaling molecules. Interacts with IER5. In terms of tissue distribution, highly expressed in brain.

In terms of biological role, the B regulatory subunit might modulate substrate selectivity and catalytic activity, and might also direct the localization of the catalytic enzyme to a particular subcellular compartment. The sequence is that of Serine/threonine-protein phosphatase 2A 55 kDa regulatory subunit B gamma isoform (PPP2R2C) from Oryctolagus cuniculus (Rabbit).